A 2554-amino-acid chain; its full sequence is DnaJ homolog subfamily C GRV2 (2554 aa).

Disordered regions lie at residues 746-766 (DVVD…KRLL) and 810-833 (QRRA…GVDS). Polar residues predominate over residues 815–825 (DSSSEASNPQA). Coiled coils occupy residues 925–951 (TRQE…EDIS) and 1518–1546 (RTAS…LKRQ). Positions 1524–1606 (LNEEISNISK…AQCILYRRYG (83 aa)) constitute a J domain. Disordered regions lie at residues 1960 to 1994 (IEDR…SSEG) and 2339 to 2366 (SGEV…GQTP). Over residues 1966 to 1977 (SNDTPELQSSVA) the composition is skewed to polar residues. Residues 1982-1994 (IEEHSDHQPSSEG) are compositionally biased toward basic and acidic residues. A compositionally biased stretch (polar residues) spans 2352–2366 (VNESTDPSSLPGQTP).

Constitutively expressed in roots, hypocotyls, leaves (e.g. vascular tissues), stems, flowers (e.g. petals and stigmas), siliques and pollen.

The protein localises to the endosome membrane. Functionally, required for endosome formation, vacuolar protein sorting and determination of the embryo growth axis. Necessary for the transport of proteins into protein storage vacuoles (PSVs). Participates in vesicle trafficking from the endosome to the central vacuole. Involved in the regulation of shoot phototropism and gravitropism, probably through the positioning of specialized amyloplasts (statoliths) in endodermal cells. The protein is DnaJ homolog subfamily C GRV2 (GRV2) of Arabidopsis thaliana (Mouse-ear cress).